We begin with the raw amino-acid sequence, 531 residues long: Coiled-coil domain-containing protein 9 (531 aa).

The segment at 40–531 is disordered; that stretch reads EDRKKAELEG…PGEAWPFESV (492 aa). The span at 59-72 shows a compositional bias: basic and acidic residues; it reads RSVEKENVAVESEK. At serine 80 the chain carries Phosphoserine. Position 95 is a phosphothreonine (threonine 95). Omega-N-methylarginine is present on arginine 107. Serine 111 carries the phosphoserine modification. Omega-N-methylarginine occurs at positions 121, 128, and 130. Arginine 131, arginine 133, and arginine 135 each carry asymmetric dimethylarginine. At serine 137 the chain carries Phosphoserine. Basic and acidic residues-rich tracts occupy residues 148 to 185, 194 to 217, and 227 to 241; these read ISDR…REGV, FLDD…EESR, and DFER…ERQG. Residues 149-185 adopt a coiled-coil conformation; it reads SDRKSKEWEERRRQNIEKMNEEMEKIAEYERNQREGV. Serine 202 carries the post-translational modification Phosphoserine. A phosphoserine mark is found at serine 248 and serine 255. Composition is skewed to basic and acidic residues over residues 258–279, 289–302, 311–320, and 361–372; these read GRER…QERL, WRRE…DGMF, EPSHRYDDQA, and YSDHDDRWETKE. Serine 376, serine 386, and serine 390 each carry phosphoserine. Positions 386–395 are enriched in low complexity; the sequence is SPETSPKETP. Pro residues predominate over residues 396–406; that stretch reads MQPPEIPAPAH. Positions 411 to 446 are enriched in acidic residues; sequence DEGEENEGEEDEEWEDISEDEEEEEIEVEEGDEEEP. Residue serine 521 is modified to Phosphoserine.

Probable component of the exon junction complex (EJC); the association is RNA-dependent.

Functionally, probable component of the exon junction complex (EJC), a multiprotein complex that associates immediately upstream of the exon-exon junction on mRNAs and serves as a positional landmark for the intron exon structure of genes and directs post-transcriptional processes in the cytoplasm such as mRNA export, nonsense-mediated mRNA decay (NMD) or translation. The protein is Coiled-coil domain-containing protein 9 of Homo sapiens (Human).